The primary structure comprises 429 residues: 3-phosphoshikimate 1-carboxyvinyltransferase (429 aa).

3-phosphoshikimate is bound by residues Lys-23, Ser-24, and Arg-28. Lys-23 contacts phosphoenolpyruvate. Phosphoenolpyruvate-binding residues include Gly-95 and Arg-123. The 3-phosphoshikimate site is built by Ser-168, Gln-170, Asp-316, and Lys-343. Gln-170 lines the phosphoenolpyruvate pocket. The active-site Proton acceptor is Asp-316. 2 residues coordinate phosphoenolpyruvate: Arg-347 and Arg-389.

The protein belongs to the EPSP synthase family. In terms of assembly, monomer.

The protein resides in the cytoplasm. The enzyme catalyses 3-phosphoshikimate + phosphoenolpyruvate = 5-O-(1-carboxyvinyl)-3-phosphoshikimate + phosphate. It functions in the pathway metabolic intermediate biosynthesis; chorismate biosynthesis; chorismate from D-erythrose 4-phosphate and phosphoenolpyruvate: step 6/7. In terms of biological role, catalyzes the transfer of the enolpyruvyl moiety of phosphoenolpyruvate (PEP) to the 5-hydroxyl of shikimate-3-phosphate (S3P) to produce enolpyruvyl shikimate-3-phosphate and inorganic phosphate. This Bacillus cereus (strain ZK / E33L) protein is 3-phosphoshikimate 1-carboxyvinyltransferase.